Reading from the N-terminus, the 282-residue chain is MTDLIQLKMIIEKAFNNHDSLNTATKGEIRDSVEYTLNLLDKGEIRVAERQENGQWHVHEWLKKAVLMSFRLNPMHIISGGANESFWWDKIPSKFSGWQETDFKKANFRSVPGAIVRHSAYIASNVILMPSFVNLGAYVDEETMIDTWATVGSCAQIGKHVHLSGGVGIGGVLEPLQASPTIIEDHCFIGARSEVVEGCIIREGSVLGMGVFIGKSTKIIDRSTGEVFIGEVPAYSVVVPGSLPGKPLPNGEAGPNLYCAVIVKRVDQKTREKTSINDLLRD.

Substrate-binding residues include R109 and D146.

Belongs to the transferase hexapeptide repeat family. In terms of assembly, homotrimer.

The protein localises to the cytoplasm. The enzyme catalyses (S)-2,3,4,5-tetrahydrodipicolinate + succinyl-CoA + H2O = (S)-2-succinylamino-6-oxoheptanedioate + CoA. It participates in amino-acid biosynthesis; L-lysine biosynthesis via DAP pathway; LL-2,6-diaminopimelate from (S)-tetrahydrodipicolinate (succinylase route): step 1/3. This chain is 2,3,4,5-tetrahydropyridine-2,6-dicarboxylate N-succinyltransferase, found in Bartonella bacilliformis (strain ATCC 35685 / KC583 / Herrer 020/F12,63).